The primary structure comprises 373 residues: Chaperone protein DnaJ (373 aa).

Residues 4–68 (DFYEILGVSR…QARANYDRFG (65 aa)) form the J domain. Residues 132–214 (GGEKEIRINH…CGGQGHIQVS (83 aa)) form a CR-type zinc finger. Zn(2+) is bound by residues cysteine 145, cysteine 148, cysteine 162, cysteine 165, cysteine 188, cysteine 191, cysteine 202, and cysteine 205. CXXCXGXG motif repeat units follow at residues 145 to 152 (CKTCQGTG), 162 to 169 (CSTCGGVG), 188 to 195 (CPTCGGSG), and 202 to 209 (CESCGGQG).

Belongs to the DnaJ family. As to quaternary structure, homodimer. Zn(2+) is required as a cofactor.

It is found in the cytoplasm. Its function is as follows. Participates actively in the response to hyperosmotic and heat shock by preventing the aggregation of stress-denatured proteins and by disaggregating proteins, also in an autonomous, DnaK-independent fashion. Unfolded proteins bind initially to DnaJ; upon interaction with the DnaJ-bound protein, DnaK hydrolyzes its bound ATP, resulting in the formation of a stable complex. GrpE releases ADP from DnaK; ATP binding to DnaK triggers the release of the substrate protein, thus completing the reaction cycle. Several rounds of ATP-dependent interactions between DnaJ, DnaK and GrpE are required for fully efficient folding. Also involved, together with DnaK and GrpE, in the DNA replication of plasmids through activation of initiation proteins. The chain is Chaperone protein DnaJ from Thermosynechococcus vestitus (strain NIES-2133 / IAM M-273 / BP-1).